Here is a 127-residue protein sequence, read N- to C-terminus: Small ribosomal subunit protein uS11 (127 aa).

The protein belongs to the universal ribosomal protein uS11 family. Part of the 30S ribosomal subunit. Interacts with proteins S7 and S18. Binds to IF-3.

Functionally, located on the platform of the 30S subunit, it bridges several disparate RNA helices of the 16S rRNA. Forms part of the Shine-Dalgarno cleft in the 70S ribosome. In Streptococcus agalactiae serotype Ia (strain ATCC 27591 / A909 / CDC SS700), this protein is Small ribosomal subunit protein uS11.